Reading from the N-terminus, the 659-residue chain is Mitochondrial Rho GTPase 1 (659 aa).

The Cytoplasmic portion of the chain corresponds to 1-631 (MTKTRIRIVV…LTNDIDYRQT (631 aa)). One can recognise a Miro 1 domain in the interval 3–183 (KTRIRIVVCG…FYLCQRTITN (181 aa)). GTP-binding positions include 12–19 (GDSGVGKT), 61–63 (DTG), and 115–118 (NKCD). 2 EF-hand domains span residues 199 to 234 (LGVLALKRVFVLSDMDQDGFLNDDEITKLQKKCFSK) and 328 to 363 (LGYRFFVDTFLKYDKDNDGGLNNDELHLLFKTTPGL). Ca(2+)-binding residues include Asp212, Asp214, Asp216, Glu223, Asp341, Asp343, Asp345, and Glu352. The Miro 2 domain occupies 444–609 (RKVLNCYMLG…FIKLTEVALE (166 aa)). GTP contacts are provided by residues 453–460 (GKGNSGKS), 489–493 (ELKGG), and 558–561 (LKAD). A helical; Anchor for type IV membrane protein membrane pass occupies residues 632–652 (IVAISSVVGFASLFTFTALKI). The Mitochondrial intermembrane segment spans residues 653–659 (YSSFKNT).

This sequence belongs to the mitochondrial Rho GTPase family.

It is found in the mitochondrion outer membrane. Mitochondrial GTPase involved in mitochondrial trafficking. Probably involved in control of anterograde transport of mitochondria and their subcellular distribution. This is Mitochondrial Rho GTPase 1 (GEM1) from Kluyveromyces lactis (strain ATCC 8585 / CBS 2359 / DSM 70799 / NBRC 1267 / NRRL Y-1140 / WM37) (Yeast).